The sequence spans 518 residues: Calcium-dependent protein kinase 1 (518 aa).

Positions 1-10 (MGNRTSRHHR) are enriched in basic residues. Residues 1-49 (MGNRTSRHHRAAPEQPPPQPKPKPQPQQQQQQWPRPQQPTPPPAAAPDA) form a disordered region. Glycine 2 carries the N-myristoyl glycine lipid modification. Residues 14–25 (EQPPPQPKPKPQ) are compositionally biased toward pro residues. Low complexity predominate over residues 26–35 (PQQQQQQWPR). The segment covering 36 to 45 (PQQPTPPPAA) has biased composition (pro residues). One can recognise a Protein kinase domain in the interval 66–324 (YTFGRELGRG…SAEILNHPWI (259 aa)). ATP is bound by residues 72–80 (LGRGQFGVT) and lysine 95. Catalysis depends on aspartate 190, which acts as the Proton acceptor. Residues 330–360 (APDKPLDITVISRMKQFRAMNKLKKVALKVV) are autoinhibitory domain. 4 EF-hand domains span residues 367–402 (EEITGLKEMFRSLDTDNSGTITLEELRSGLPKLGTK), 403–438 (ISESEIRQLMEAADVDGNGTIDYAEFISATMHMNRL), 439–474 (EKEDHILKAFEYFDKDHSGYITVDELEEALKKYDMG), and 475–509 (DDKTIKEIIAEVDTDHDGRINYQEFVAMMRNNNPE). 20 residues coordinate Ca(2+): aspartate 380, aspartate 382, serine 384, threonine 386, glutamate 391, aspartate 416, aspartate 418, asparagine 420, threonine 422, glutamate 427, aspartate 452, aspartate 454, serine 456, tyrosine 458, glutamate 463, aspartate 487, aspartate 489, aspartate 491, arginine 493, and glutamate 498.

The protein belongs to the protein kinase superfamily. Ser/Thr protein kinase family. CDPK subfamily. In terms of tissue distribution, expressed in roots and leaf blades.

The protein localises to the membrane. The catalysed reaction is L-seryl-[protein] + ATP = O-phospho-L-seryl-[protein] + ADP + H(+). It carries out the reaction L-threonyl-[protein] + ATP = O-phospho-L-threonyl-[protein] + ADP + H(+). Activated by calcium. Autophosphorylation may play an important role in the regulation of the kinase activity. May play a role in signal transduction pathways that involve calcium as a second messenger. The polypeptide is Calcium-dependent protein kinase 1 (Oryza sativa subsp. japonica (Rice)).